The sequence spans 1071 residues: ATP-dependent helicase/deoxyribonuclease subunit B (1071 aa).

This sequence belongs to the helicase family. AddB/RexB type 2 subfamily. In terms of assembly, heterodimer of AddA and RexB. The cofactor is Mg(2+).

Functionally, the heterodimer acts as both an ATP-dependent DNA helicase and an ATP-dependent, dual-direction single-stranded exonuclease. Recognizes the chi site generating a DNA molecule suitable for the initiation of homologous recombination. This subunit has 5' -&gt; 3' nuclease activity but not helicase activity. The polypeptide is ATP-dependent helicase/deoxyribonuclease subunit B (Streptococcus pyogenes serotype M28 (strain MGAS6180)).